The chain runs to 274 residues: Putative ankyrin repeat protein R597 (274 aa).

ANK repeat units follow at residues 78-112 (VGLP…NNND), 114-144 (PISE…SLKI), 146-174 (SRYH…DIQG), and 176-205 (NLSY…NIND).

This is Putative ankyrin repeat protein R597 from Acanthamoeba polyphaga mimivirus (APMV).